The following is a 244-amino-acid chain: MKLAQARRPATSKPRLISTWLLRPLLLLLTAALLYQSWFLLHIVYWRSYSPTTSAFMQDRLKIMRQQNPAASLQHQWVDYEQISSHLKRAVIAAEDARFLQHQGFDYKAIETAWKKNLKQRKWAAGGSTISQQLAKNLFLSTEKTVWRKSRETLITLMLEEFLTKRRILEIYLNIIEWGDGIFGIEAAARHYFGISAASLTPAQAAWLASIIPNPRFYDTRRTLPKLLNKSRIILSRLPAAKIP.

Residues 25 to 45 (LLLLLTAALLYQSWFLLHIVY) traverse the membrane as a helical segment.

It belongs to the glycosyltransferase 51 family.

The protein resides in the cell inner membrane. It catalyses the reaction [GlcNAc-(1-&gt;4)-Mur2Ac(oyl-L-Ala-gamma-D-Glu-L-Lys-D-Ala-D-Ala)](n)-di-trans,octa-cis-undecaprenyl diphosphate + beta-D-GlcNAc-(1-&gt;4)-Mur2Ac(oyl-L-Ala-gamma-D-Glu-L-Lys-D-Ala-D-Ala)-di-trans,octa-cis-undecaprenyl diphosphate = [GlcNAc-(1-&gt;4)-Mur2Ac(oyl-L-Ala-gamma-D-Glu-L-Lys-D-Ala-D-Ala)](n+1)-di-trans,octa-cis-undecaprenyl diphosphate + di-trans,octa-cis-undecaprenyl diphosphate + H(+). It participates in cell wall biogenesis; peptidoglycan biosynthesis. Functionally, peptidoglycan polymerase that catalyzes glycan chain elongation from lipid-linked precursors. The protein is Biosynthetic peptidoglycan transglycosylase of Nitrosomonas europaea (strain ATCC 19718 / CIP 103999 / KCTC 2705 / NBRC 14298).